A 99-amino-acid chain; its full sequence is UPF0235 protein Cag_0319 (99 aa).

The protein belongs to the UPF0235 family.

This chain is UPF0235 protein Cag_0319, found in Chlorobium chlorochromatii (strain CaD3).